Reading from the N-terminus, the 303-residue chain is CDAN1-interacting nuclease 1 (303 aa).

The protein resides in the nucleus. The protein localises to the cytoplasm. Its function is as follows. May play a role in erythroid cell differentiation. The protein is CDAN1-interacting nuclease 1 (cdin1) of Xenopus tropicalis (Western clawed frog).